The sequence spans 422 residues: Histidine--tRNA ligase (422 aa).

The protein belongs to the class-II aminoacyl-tRNA synthetase family. In terms of assembly, homodimer.

Its subcellular location is the cytoplasm. It catalyses the reaction tRNA(His) + L-histidine + ATP = L-histidyl-tRNA(His) + AMP + diphosphate + H(+). The protein is Histidine--tRNA ligase of Vesicomyosocius okutanii subsp. Calyptogena okutanii (strain HA).